The primary structure comprises 159 residues: Ribosomal RNA large subunit methyltransferase H (159 aa).

S-adenosyl-L-methionine is bound by residues L76, G108, and 127-132; that span reads FGKMTL.

It belongs to the RNA methyltransferase RlmH family. Homodimer.

It localises to the cytoplasm. It carries out the reaction pseudouridine(1915) in 23S rRNA + S-adenosyl-L-methionine = N(3)-methylpseudouridine(1915) in 23S rRNA + S-adenosyl-L-homocysteine + H(+). In terms of biological role, specifically methylates the pseudouridine at position 1915 (m3Psi1915) in 23S rRNA. In Lysinibacillus sphaericus (strain C3-41), this protein is Ribosomal RNA large subunit methyltransferase H.